The chain runs to 328 residues: tRNA uridine(34) hydroxylase (328 aa).

Residues 130–224 (LDEDTVVLDT…YGKDPEVQGE (95 aa)) enclose the Rhodanese domain. Cys-184 acts as the Cysteine persulfide intermediate in catalysis.

Belongs to the TrhO family.

The catalysed reaction is uridine(34) in tRNA + AH2 + O2 = 5-hydroxyuridine(34) in tRNA + A + H2O. Its function is as follows. Catalyzes oxygen-dependent 5-hydroxyuridine (ho5U) modification at position 34 in tRNAs. This is tRNA uridine(34) hydroxylase from Streptococcus pyogenes serotype M49 (strain NZ131).